A 434-amino-acid polypeptide reads, in one-letter code: Histidine--tRNA ligase (434 aa).

This sequence belongs to the class-II aminoacyl-tRNA synthetase family. Homodimer.

Its subcellular location is the cytoplasm. It carries out the reaction tRNA(His) + L-histidine + ATP = L-histidyl-tRNA(His) + AMP + diphosphate + H(+). In Chlorobium phaeobacteroides (strain BS1), this protein is Histidine--tRNA ligase.